The chain runs to 807 residues: Glycerol-3-phosphate acyltransferase (807 aa).

Positions 308 to 313 (CHRSHM) match the HXXXXD motif motif.

Belongs to the GPAT/DAPAT family.

Its subcellular location is the cell inner membrane. The enzyme catalyses sn-glycerol 3-phosphate + an acyl-CoA = a 1-acyl-sn-glycero-3-phosphate + CoA. It participates in phospholipid metabolism; CDP-diacylglycerol biosynthesis; CDP-diacylglycerol from sn-glycerol 3-phosphate: step 1/3. The polypeptide is Glycerol-3-phosphate acyltransferase (Shewanella sp. (strain MR-7)).